The following is a 173-amino-acid chain: Placenta-specific protein 1 (173 aa).

The first 23 residues, 1-23, serve as a signal peptide directing secretion; it reads MNLRKFLGGTVLVAFMLFSYSEQ.

This sequence belongs to the PLAC1 family. As to expression, expressed in placenta.

Its subcellular location is the secreted. In terms of biological role, may play a role in placental development. The chain is Placenta-specific protein 1 from Mus musculus (Mouse).